The chain runs to 3184 residues: Probable serine/threonine-protein kinase pats1 (3184 aa).

A compositionally biased stretch (pro residues) spans 369–378 (DPPPPPPSNS). Disordered stretches follow at residues 369–516 (DPPP…QIPP) and 913–1013 (SITR…TSIL). The span at 379–415 (SPPISKSTSNNNLNVSNYHNNNNNNNNSNSNLSNSGN) shows a compositional bias: low complexity. Residues 421-450 (DFQSQNLVKSYNRENSGNSLNSMLHQTSLP) show a composition bias toward polar residues. Positions 451 to 512 (NNNNSNVVNN…NNNNSNNNNS (62 aa)) are enriched in low complexity. Positions 842 to 1348 (CFPDHSLLQE…FQDTMWNEYF (507 aa)) constitute a Myotubularin phosphatase domain. Over residues 913 to 934 (SITRATSPEDQNNGSSNYLLTP) the composition is skewed to polar residues. The segment covering 935 to 993 (NSPNSSSSNLANNNNSNNNNINNNNNNNNNNNNNNNNNSNNNNNNNNNNNNNNNNNNNN) has biased composition (low complexity). The span at 1000-1013 (SRSTTIDNGQTSIL) shows a compositional bias: polar residues. LRR repeat units lie at residues 1391 to 1412 (FLET…STLY), 1416 to 1438 (GLRE…SSLV), 1439 to 1460 (KLEK…TVVL), 1467 to 1488 (SLTE…FSMF), 1491 to 1512 (SLKK…LGML), 1514 to 1535 (NLIE…GVGI), 1541 to 1563 (KLCI…GDLK), 1564 to 1585 (SLEK…FRQL), 1587 to 1608 (NLEE…VCFL), 1610 to 1631 (NLKK…ISQL), 1633 to 1654 (KLMI…IGQL), 1656 to 1678 (QLVS…MGLL), and 1680 to 1701 (NLVE…IVSL). In terms of domain architecture, Roc spans 1716 to 1910 (GQEQCYKMKL…EKLEALVQSQ (195 aa)). A small GTPase-like region spans residues 1716–1910 (GQEQCYKMKL…EKLEALVQSQ (195 aa)). GTP is bound by residues 1729–1736 (GQENVGKT), 1797–1801 (DFAGQ), and 1854–1857 (THLD). One can recognise a COR domain in the interval 1918 to 2127 (PRSYMLLENL…KCYWKNGMIL (210 aa)). The Protein kinase domain maps to 2247–2519 (LMIEELIGEG…RLIKIAEAMF (273 aa)). ATP contacts are provided by residues 2253-2261 (IGEGGAALV) and lysine 2274. The active-site Proton acceptor is the aspartate 2379. Disordered stretches follow at residues 2528 to 2609 (YQQQ…TISH) and 2652 to 2671 (NSIN…NSLL). Low complexity predominate over residues 2529–2555 (QQQQQQQQQQQQSSPSKSSSTSPIIKS). A compositionally biased stretch (polar residues) spans 2556-2576 (LNLSTVSELGESSNQTPKQNI). WD repeat units follow at residues 2745–2785 (PNQG…KYIQ), 2790–2829 (ANKD…KIKS), 2909–2947 (AHER…HTIE), 2949–2986 (AHSS…LVSE), and 2990–3040 (KHKD…NSRS). Over residues 3055-3126 (GSSNSITNSN…NYYYSNNVNS (72 aa)) the composition is skewed to low complexity. The interval 3055–3164 (GSSNSITNSN…TPPGSKGLMQ (110 aa)) is disordered. Residues 3141–3157 (HEQTSPNSATPLSSTPP) show a composition bias toward polar residues.

It belongs to the protein kinase superfamily. TKL Ser/Thr protein kinase family. ROCO subfamily.

It catalyses the reaction L-seryl-[protein] + ATP = O-phospho-L-seryl-[protein] + ADP + H(+). The enzyme catalyses L-threonyl-[protein] + ATP = O-phospho-L-threonyl-[protein] + ADP + H(+). In terms of biological role, may act as a serine/threonine-protein kinase and guanine-nucleotide releasing factor. Essential regulator of cytokinesis involved in the binding to actomyosin cytoskeleton. The polypeptide is Probable serine/threonine-protein kinase pats1 (pats1) (Dictyostelium discoideum (Social amoeba)).